A 2555-amino-acid polypeptide reads, in one-letter code: Ubiquitin carboxyl-terminal hydrolase 9Y (2555 aa).

The disordered stretch occupies residues 1 to 66; the sequence is MTAITHGSPV…APPQHEDEEP (66 aa). A compositionally biased stretch (polar residues) spans 13–45; sequence NDSQGQVLDGQSQHLFQQNQTSSPDSSNENSVA. Ser-589 bears the Phosphoserine mark. Thr-591 bears the Phosphothreonine mark. The tract at residues 972 to 997 is disordered; the sequence is NMPSSPDSSSDSSTASPGNHRNHYND. The segment covering 974 to 984 has biased composition (low complexity); that stretch reads PSSPDSSSDSS. The USP domain occupies 1559–1958; it reads VGLKNAGATC…NAYILFYEQM (400 aa). The active-site Nucleophile is Cys-1568. Positions 1729, 1731, 1773, and 1776 each coordinate Zn(2+). His-1881 functions as the Proton acceptor in the catalytic mechanism. Ser-2444 carries the post-translational modification Phosphoserine. The segment covering 2476-2485 has biased composition (acidic residues); sequence PEEEPDDQDA. The tract at residues 2476–2555 is disordered; it reads PEEEPDDQDA…EVSSPQMKDQ (80 aa). 2 stretches are compositionally biased toward polar residues: residues 2504–2514 and 2528–2555; these read PASQYQQNNHV and NNPQ…MKDQ. Tyr-2541 is subject to Phosphotyrosine. Position 2548 is a phosphoserine (Ser-2548).

It belongs to the peptidase C19 family. Widely expressed in embryonic and adult tissues.

It carries out the reaction Thiol-dependent hydrolysis of ester, thioester, amide, peptide and isopeptide bonds formed by the C-terminal Gly of ubiquitin (a 76-residue protein attached to proteins as an intracellular targeting signal).. Its pathway is protein modification; protein ubiquitination. Functionally, deubiquitinase that mediates deubiquitination of target proteins. May stabilize target proteins that are important for male germ cell development. In Homo sapiens (Human), this protein is Ubiquitin carboxyl-terminal hydrolase 9Y.